We begin with the raw amino-acid sequence, 322 residues long: Zinc finger C2HC domain-containing protein CBG14627 (322 aa).

2 consecutive C2HC/C3H-type zinc fingers follow at residues 9-38 (PVYP…LATL) and 119-148 (DYVQ…QTTR). Zn(2+) is bound by residues cysteine 13, cysteine 16, histidine 28, cysteine 32, cysteine 123, cysteine 126, histidine 138, and cysteine 142. The segment at 144-322 (EQTTRKQGGK…SRNNSRSRIF (179 aa)) is disordered. Positions 148–168 (RKQGGKSSAGNRGLTSNNYRS) are enriched in polar residues. Basic and acidic residues predominate over residues 171-219 (SKHEGRKQESSSRNGSAERKTTTRGRDGSLSRARRDDSNDLTNRRKSLE). The segment covering 220–238 (TRSQLTTGQANNRTTSLSA) has biased composition (polar residues). Low complexity predominate over residues 278–294 (TTTTASASRSGSGSSSR). A compositionally biased stretch (basic and acidic residues) spans 296 to 305 (RTRDESRESR). Residues 311 to 322 (SNSRNNSRSRIF) are compositionally biased toward low complexity.

This sequence belongs to the ZC2HC1 family. It depends on Zn(2+) as a cofactor.

This chain is Zinc finger C2HC domain-containing protein CBG14627, found in Caenorhabditis briggsae.